Here is a 646-residue protein sequence, read N- to C-terminus: Threonine--tRNA ligase (646 aa).

Residues 1 to 61 enclose the TGS domain; that stretch reads MIKITFPDGS…NEDASVVLYK (61 aa). The segment at 242-541 is catalytic; it reads DHRKIGKEMQ…LIEHTAGKFP (300 aa). Residues C337, H388, and H518 each contribute to the Zn(2+) site.

This sequence belongs to the class-II aminoacyl-tRNA synthetase family. In terms of assembly, homodimer. Requires Zn(2+) as cofactor.

It is found in the cytoplasm. It catalyses the reaction tRNA(Thr) + L-threonine + ATP = L-threonyl-tRNA(Thr) + AMP + diphosphate + H(+). Functionally, catalyzes the attachment of threonine to tRNA(Thr) in a two-step reaction: L-threonine is first activated by ATP to form Thr-AMP and then transferred to the acceptor end of tRNA(Thr). Also edits incorrectly charged L-seryl-tRNA(Thr). This is Threonine--tRNA ligase from Bacteroides fragilis (strain YCH46).